The sequence spans 1122 residues: Protein CAF130 (1122 aa).

The disordered stretch occupies residues 1–24; that stretch reads MTKKKAATNYAERQNLASEDSSGD. Residues 11-24 are compositionally biased toward polar residues; it reads AERQNLASEDSSGD. Ser1042 is modified (phosphoserine).

In terms of assembly, subunit of the 1.0 MDa CCR4-NOT core complex that contains CCR4, CAF1, NOT1, NOT2, NOT3, NOT4, NOT5, CAF40 and CAF130. In the complex interacts with NOT1. The core complex probably is part of a less characterized 1.9 MDa CCR4-NOT complex.

It localises to the cytoplasm. Its subcellular location is the nucleus. Functionally, acts as a component of the CCR4-NOT core complex, which in the nucleus seems to be a general transcription factor, and in the cytoplasm the major mRNA deadenylase involved in mRNA turnover. This Saccharomyces cerevisiae (strain ATCC 204508 / S288c) (Baker's yeast) protein is Protein CAF130 (CAF130).